The following is a 1186-amino-acid chain: Tricalbin-1 (1186 aa).

Residues 1 to 50 are disordered; sequence MAKEDTGVTAPKKPETAQVANINGIDKLEPPKTKEETESSKSVSSEKAAH. Topologically, residues 1 to 106 are cytoplasmic; it reads MAKEDTGVTA…NIIPDSLYGD (106 aa). Positions 26-39 are enriched in basic and acidic residues; that stretch reads DKLEPPKTKEETES. The chain crosses the membrane as a helical span at residues 107–127; it reads WYHSVAIFFIGGVASFALGHY. Position 128 (K128) is a topological domain, extracellular. The helical transmembrane segment at 129–149 threads the bilayer; sequence FSMGSAFFVIVITSLLYRTSA. Topologically, residues 150 to 1186 are cytoplasmic; that stretch reads KKYRGSIREL…HEMGEEETKF (1037 aa). Positions 172–375 constitute an SMP-LTD domain; sequence DYESLEWLNA…PPFSLQLNIP (204 aa). 3 C2 domains span residues 366–487, 512–636, and 640–757; these read PPFS…RNLK, EKKL…IKIT, and RPVR…DKYE. Residues 795-822 are a coiled coil; that stretch reads LEEIQDLDKVNKKKKALELRKSAIDEKK. Positions 976–1094 constitute a C2 4 domain; it reads PIDTKQLPAN…KVEGTTELDV (119 aa). S1000 is subject to Phosphoserine. D1008, D1014, D1064, D1066, S1069, and D1072 together coordinate Ca(2+).

Belongs to the tricalbin family. In terms of assembly, interacts with TCB2 via its C-terminal domain. It depends on Ca(2+) as a cofactor.

It is found in the cell membrane. It localises to the endoplasmic reticulum membrane. Functionally, may play a role in membrane trafficking. The sequence is that of Tricalbin-1 (TCB1) from Saccharomyces cerevisiae (strain ATCC 204508 / S288c) (Baker's yeast).